We begin with the raw amino-acid sequence, 43 residues long: Alpha-conotoxin-like Leo-A1 (43 aa).

Positions 1-26 are excised as a propeptide; it reads LTLDRASDDTDVAAEIMSGLIALAID. Disulfide bonds link cysteine 28–cysteine 34 and cysteine 29–cysteine 42. A lacks the Ser-Xaa-Pro motif that is crucial for potent interaction with nAChR region spans residues 30 to 32; sequence SDS.

The protein belongs to the conotoxin A superfamily. As to expression, expressed by the venom duct.

The protein resides in the secreted. In terms of biological role, alpha-conotoxins act on postsynaptic membranes, they bind to the nicotinic acetylcholine receptors (nAChR) and thus inhibit them. Has possibly a distinct nAChR binding mode from other alpha-conotoxins, due to a different three residue motif (lacks the Ser-Xaa-Pro motif). The chain is Alpha-conotoxin-like Leo-A1 from Conus leopardus (Leopard cone).